A 539-amino-acid polypeptide reads, in one-letter code: Chaperonin GroEL (539 aa).

Residues 29 to 32 (TIGP), 86 to 90 (DGTTT), G413, 476 to 478 (NAA), and D492 contribute to the ATP site.

Belongs to the chaperonin (HSP60) family. In terms of assembly, forms a cylinder of 14 subunits composed of two heptameric rings stacked back-to-back. Interacts with the co-chaperonin GroES.

The protein resides in the cytoplasm. The catalysed reaction is ATP + H2O + a folded polypeptide = ADP + phosphate + an unfolded polypeptide.. Together with its co-chaperonin GroES, plays an essential role in assisting protein folding. The GroEL-GroES system forms a nano-cage that allows encapsulation of the non-native substrate proteins and provides a physical environment optimized to promote and accelerate protein folding. In Staphylococcus epidermidis (strain ATCC 12228 / FDA PCI 1200), this protein is Chaperonin GroEL.